Consider the following 261-residue polypeptide: Cytochrome c oxidase subunit 3 (261 aa).

Residues 1-15 (MAHQAHAYHMVDPSP) are Mitochondrial matrix-facing. A helical membrane pass occupies residues 16 to 34 (WPLTGAVAALLMTSGLAVW). The Mitochondrial intermembrane portion of the chain corresponds to 35–40 (FHFHSM). The chain crosses the membrane as a helical span at residues 41-66 (YLLYLGLTLLLLTMVQWWRDIIREGT). Residues 67–72 (FQGHHT) lie on the Mitochondrial matrix side of the membrane. A helical membrane pass occupies residues 73–105 (PPVQKGLRYGMILFITSEVFFFLGFFWAFYHSS). Topologically, residues 106 to 128 (LAPTPELGGCWPPTGIYPLDPFE) are mitochondrial intermembrane. The helical transmembrane segment at 129–152 (VPLLNTAVLLASGVTVTWAHHSLM) threads the bilayer. Residues 153 to 155 (EGN) lie on the Mitochondrial matrix side of the membrane. The chain crosses the membrane as a helical span at residues 156–183 (RKEAIQALTLTVLLGFYFTALQAMEYYE). Over 184–190 (APFTIAD) the chain is Mitochondrial intermembrane. The chain crosses the membrane as a helical span at residues 191–223 (GVYGSTFFVATGFHGLHVIIGSTFLMVCLLRQI). The Mitochondrial matrix portion of the chain corresponds to 224–232 (QYHFTSEHH). Residues 233 to 256 (FGFERAAWYWHFVDVVWLFLYVSI) traverse the membrane as a helical segment. Residues 257-261 (YWWGS) are Mitochondrial intermembrane-facing.

This sequence belongs to the cytochrome c oxidase subunit 3 family. In terms of assembly, component of the cytochrome c oxidase (complex IV, CIV), a multisubunit enzyme composed of 14 subunits. The complex is composed of a catalytic core of 3 subunits MT-CO1, MT-CO2 and MT-CO3, encoded in the mitochondrial DNA, and 11 supernumerary subunits COX4I, COX5A, COX5B, COX6A, COX6B, COX6C, COX7A, COX7B, COX7C, COX8 and NDUFA4, which are encoded in the nuclear genome. The complex exists as a monomer or a dimer and forms supercomplexes (SCs) in the inner mitochondrial membrane with NADH-ubiquinone oxidoreductase (complex I, CI) and ubiquinol-cytochrome c oxidoreductase (cytochrome b-c1 complex, complex III, CIII), resulting in different assemblies (supercomplex SCI(1)III(2)IV(1) and megacomplex MCI(2)III(2)IV(2)).

The protein localises to the mitochondrion inner membrane. It carries out the reaction 4 Fe(II)-[cytochrome c] + O2 + 8 H(+)(in) = 4 Fe(III)-[cytochrome c] + 2 H2O + 4 H(+)(out). Its function is as follows. Component of the cytochrome c oxidase, the last enzyme in the mitochondrial electron transport chain which drives oxidative phosphorylation. The respiratory chain contains 3 multisubunit complexes succinate dehydrogenase (complex II, CII), ubiquinol-cytochrome c oxidoreductase (cytochrome b-c1 complex, complex III, CIII) and cytochrome c oxidase (complex IV, CIV), that cooperate to transfer electrons derived from NADH and succinate to molecular oxygen, creating an electrochemical gradient over the inner membrane that drives transmembrane transport and the ATP synthase. Cytochrome c oxidase is the component of the respiratory chain that catalyzes the reduction of oxygen to water. Electrons originating from reduced cytochrome c in the intermembrane space (IMS) are transferred via the dinuclear copper A center (CU(A)) of subunit 2 and heme A of subunit 1 to the active site in subunit 1, a binuclear center (BNC) formed by heme A3 and copper B (CU(B)). The BNC reduces molecular oxygen to 2 water molecules using 4 electrons from cytochrome c in the IMS and 4 protons from the mitochondrial matrix. The chain is Cytochrome c oxidase subunit 3 (MT-CO3) from Squalus acanthias (Spiny dogfish).